Here is a 382-residue protein sequence, read N- to C-terminus: 4-hydroxy-3-methylbut-2-en-1-yl diphosphate synthase (flavodoxin) (382 aa).

[4Fe-4S] cluster-binding residues include Cys273, Cys276, Cys308, and Glu315.

It belongs to the IspG family. The cofactor is [4Fe-4S] cluster.

It carries out the reaction (2E)-4-hydroxy-3-methylbut-2-enyl diphosphate + oxidized [flavodoxin] + H2O + 2 H(+) = 2-C-methyl-D-erythritol 2,4-cyclic diphosphate + reduced [flavodoxin]. The protein operates within isoprenoid biosynthesis; isopentenyl diphosphate biosynthesis via DXP pathway; isopentenyl diphosphate from 1-deoxy-D-xylulose 5-phosphate: step 5/6. Functionally, converts 2C-methyl-D-erythritol 2,4-cyclodiphosphate (ME-2,4cPP) into 1-hydroxy-2-methyl-2-(E)-butenyl 4-diphosphate. The protein is 4-hydroxy-3-methylbut-2-en-1-yl diphosphate synthase (flavodoxin) of Gluconacetobacter diazotrophicus (strain ATCC 49037 / DSM 5601 / CCUG 37298 / CIP 103539 / LMG 7603 / PAl5).